Consider the following 108-residue polypeptide: UPF0060 membrane protein BLi00854/BL03049 (108 aa).

The next 4 membrane-spanning stretches (helical) occupy residues 3 to 23 (IAIG…YLVW), 31 to 51 (PLWY…IPAF), 60 to 80 (VYAA…WLVD), and 86 to 106 (LYDW…LWAP).

This sequence belongs to the UPF0060 family.

The protein localises to the cell membrane. The protein is UPF0060 membrane protein BLi00854/BL03049 of Bacillus licheniformis (strain ATCC 14580 / DSM 13 / JCM 2505 / CCUG 7422 / NBRC 12200 / NCIMB 9375 / NCTC 10341 / NRRL NRS-1264 / Gibson 46).